We begin with the raw amino-acid sequence, 192 residues long: Glycerol-3-phosphate acyltransferase (192 aa).

The next 5 membrane-spanning stretches (helical) occupy residues 1-21, 49-69, 80-100, 110-130, and 143-163; these read MFIA…AYIL, GLAG…IYSL, ELCI…WLKF, IGVI…SWLF, and IVSI…VVAL.

It belongs to the PlsY family. In terms of assembly, probably interacts with PlsX.

The protein resides in the cell inner membrane. The catalysed reaction is an acyl phosphate + sn-glycerol 3-phosphate = a 1-acyl-sn-glycero-3-phosphate + phosphate. It participates in lipid metabolism; phospholipid metabolism. Its function is as follows. Catalyzes the transfer of an acyl group from acyl-phosphate (acyl-PO(4)) to glycerol-3-phosphate (G3P) to form lysophosphatidic acid (LPA). This enzyme utilizes acyl-phosphate as fatty acyl donor, but not acyl-CoA or acyl-ACP. This Anaplasma phagocytophilum (strain HZ) protein is Glycerol-3-phosphate acyltransferase.